A 359-amino-acid polypeptide reads, in one-letter code: MLRAPKCSRCRNHGYLVPVKGHTGKCRWKQCICDKCYLITERQKIMAAQKVLRTQAAEEQVATVGTQGPQLPPRAPAAAATALSSSICPLPRAVPGGVGPGPTATCFLERPPQAPSPGPSTFQLGPSGRPGPSTFQPGPGAPGGLRDRSSAWLPQLMPQAPRPELCYPDQHLPVRPVPVPGPVRPVPRLPFADYGHPLRFKSDHVVGAGNPEREPFKQCPACVPVSPYQSFPLSEGQDSSSALGVPQQRGFRHVSCSPYHRSGLVSEPARDLQPTYCSPPPPPPPPPPPPLPAPPPQPQQPHFLPPGYLSALHFLPPPPPPPSPPSFSLTYDTDKENTNDQDAEAPTEPSQDSPQEQSN.

The segment at residues 7–54 (CSRCRNHGYLVPVKGHTGKCRWKQCICDKCYLITERQKIMAAQKVLRT) is a DNA-binding region (DM). Disordered regions lie at residues 111-149 (PPQA…RDRS) and 262-359 (SGLV…EQSN). 2 stretches are compositionally biased toward pro residues: residues 277–299 (CSPP…PQPQ) and 315–325 (LPPPPPPPSPP). Over residues 348–359 (EPSQDSPQEQSN) the composition is skewed to polar residues.

The protein belongs to the DMRT family. As to expression, brain.

It localises to the nucleus. The polypeptide is Doublesex- and mab-3-related transcription factor B1 (Dmrtb1) (Mus musculus (Mouse)).